The chain runs to 211 residues: MPVVAVIDYEMGNLHSVCKGLEKAGATPIITHSHQELTKADAVILPGVGAFDPAVQSLRSRDLEQPIKDTIASGKPFLGICLGLQILFESSAEGTQPGLGIIKGKVRRFISEPGITIPHMGWNQLELTQPKSILWEHLPPQPWVYFVHSYYVDPVEPQVRAATVTHGTQTVTAAIAHENLMAVQFHPEKSSNIGLQILSNFVSQVREKIAA.

In terms of domain architecture, Glutamine amidotransferase type-1 spans 3 to 211; sequence VVAVIDYEMG…VSQVREKIAA (209 aa). Cys-81 functions as the Nucleophile in the catalytic mechanism. Residues His-186 and Glu-188 contribute to the active site.

As to quaternary structure, heterodimer of HisH and HisF.

The protein resides in the cytoplasm. It catalyses the reaction 5-[(5-phospho-1-deoxy-D-ribulos-1-ylimino)methylamino]-1-(5-phospho-beta-D-ribosyl)imidazole-4-carboxamide + L-glutamine = D-erythro-1-(imidazol-4-yl)glycerol 3-phosphate + 5-amino-1-(5-phospho-beta-D-ribosyl)imidazole-4-carboxamide + L-glutamate + H(+). It carries out the reaction L-glutamine + H2O = L-glutamate + NH4(+). It participates in amino-acid biosynthesis; L-histidine biosynthesis; L-histidine from 5-phospho-alpha-D-ribose 1-diphosphate: step 5/9. Functionally, IGPS catalyzes the conversion of PRFAR and glutamine to IGP, AICAR and glutamate. The HisH subunit catalyzes the hydrolysis of glutamine to glutamate and ammonia as part of the synthesis of IGP and AICAR. The resulting ammonia molecule is channeled to the active site of HisF. This chain is Imidazole glycerol phosphate synthase subunit HisH, found in Trichormus variabilis (strain ATCC 29413 / PCC 7937) (Anabaena variabilis).